An 894-amino-acid polypeptide reads, in one-letter code: Translation initiation factor IF-2 (894 aa).

The tract at residues Ala-25 to Asp-304 is disordered. Composition is skewed to basic and acidic residues over residues Ser-33–Lys-44, Glu-52–Pro-62, Ser-101–Asn-174, Ala-184–Asp-239, and Tyr-247–Ala-263. The segment covering Arg-283–Leu-293 has biased composition (basic residues). In terms of domain architecture, tr-type G spans Pro-393–Thr-562. Positions Gly-402–Thr-409 are G1. GTP is bound at residue Gly-402–Thr-409. A G2 region spans residues Gly-427–His-431. The tract at residues Asp-448–Gly-451 is G3. GTP is bound by residues Asp-448–His-452 and Asn-502–Asp-505. A G4 region spans residues Asn-502–Asp-505. The interval Ser-538–Lys-540 is G5.

The protein belongs to the TRAFAC class translation factor GTPase superfamily. Classic translation factor GTPase family. IF-2 subfamily.

It is found in the cytoplasm. One of the essential components for the initiation of protein synthesis. Protects formylmethionyl-tRNA from spontaneous hydrolysis and promotes its binding to the 30S ribosomal subunits. Also involved in the hydrolysis of GTP during the formation of the 70S ribosomal complex. This Vibrio campbellii (strain ATCC BAA-1116) protein is Translation initiation factor IF-2.